Reading from the N-terminus, the 131-residue chain is Structural protein ORF131 (131 aa).

Belongs to the viral ORF131/RIP family.

The protein resides in the virion. The polypeptide is Structural protein ORF131 (Acidianus convivator (ATV)).